The following is a 29-amino-acid chain: Acidic phospholipase A2 Omo-E6 (29 aa).

The Ca(2+) site is built by Tyr-27 and Gly-29.

Requires Ca(2+) as cofactor. In terms of tissue distribution, expressed by the venom gland.

It is found in the secreted. It catalyses the reaction a 1,2-diacyl-sn-glycero-3-phosphocholine + H2O = a 1-acyl-sn-glycero-3-phosphocholine + a fatty acid + H(+). Its function is as follows. Snake venom phospholipase A2 (PLA2) that inhibits the ADP- and collagen-induced human platelet aggregation. Exhibits strong hydrolytic activities and prefers the anionic micelles (dPPC with deoxycholate) to the zwitterionic micelles (dPPC with Triton X-100). PLA2 catalyzes the calcium-dependent hydrolysis of the 2-acyl groups in 3-sn-phosphoglycerides. This is Acidic phospholipase A2 Omo-E6 from Ovophis monticola (Chinese mountain pitviper).